The following is a 93-amino-acid chain: Large ribosomal subunit protein bL31 (93 aa).

The segment at 72–93 is disordered; it reads VKTVSSNADNQKETTEELIKNK. A compositionally biased stretch (basic and acidic residues) spans 81 to 93; sequence NQKETTEELIKNK.

Belongs to the bacterial ribosomal protein bL31 family. Type A subfamily. As to quaternary structure, part of the 50S ribosomal subunit.

Functionally, binds the 23S rRNA. This chain is Large ribosomal subunit protein bL31, found in Onion yellows phytoplasma (strain OY-M).